We begin with the raw amino-acid sequence, 95 residues long: Cell division protein FtsB (95 aa).

At 1-3 (MRW) the chain is on the cytoplasmic side. A helical transmembrane segment spans residues 4–21 (VLAGLTALLLWLQGLLWF). The Periplasmic portion of the chain corresponds to 22–95 (GEGGLNDVRG…QIIEREDDAR (74 aa)). The stretch at 26–76 (LNDVRGLSRSVEAQREEVDRLRQRNQALEAEVNDLKTGLEALEERARSELG) forms a coiled coil.

This sequence belongs to the FtsB family. Part of a complex composed of FtsB, FtsL and FtsQ.

Its subcellular location is the cell inner membrane. Functionally, essential cell division protein. May link together the upstream cell division proteins, which are predominantly cytoplasmic, with the downstream cell division proteins, which are predominantly periplasmic. The sequence is that of Cell division protein FtsB from Alkalilimnicola ehrlichii (strain ATCC BAA-1101 / DSM 17681 / MLHE-1).